A 322-amino-acid polypeptide reads, in one-letter code: 4-diphosphocytidyl-2-C-methyl-D-erythritol kinase (322 aa).

Residue Lys-25 is part of the active site. An ATP-binding site is contributed by 110–120 (PVAGGMAGGSA). Asp-152 is a catalytic residue.

This sequence belongs to the GHMP kinase family. IspE subfamily.

The enzyme catalyses 4-CDP-2-C-methyl-D-erythritol + ATP = 4-CDP-2-C-methyl-D-erythritol 2-phosphate + ADP + H(+). It functions in the pathway isoprenoid biosynthesis; isopentenyl diphosphate biosynthesis via DXP pathway; isopentenyl diphosphate from 1-deoxy-D-xylulose 5-phosphate: step 3/6. Catalyzes the phosphorylation of the position 2 hydroxy group of 4-diphosphocytidyl-2C-methyl-D-erythritol. The chain is 4-diphosphocytidyl-2-C-methyl-D-erythritol kinase from Mycolicibacterium gilvum (strain PYR-GCK) (Mycobacterium gilvum (strain PYR-GCK)).